We begin with the raw amino-acid sequence, 1117 residues long: RNA-directed RNA polymerase (1117 aa).

Polar residues predominate over residues 1–17; that stretch reads MTVSGRSSWQNGKTTNA. The segment at 1 to 23 is disordered; it reads MTVSGRSSWQNGKTTNAMRAGKL.

It carries out the reaction RNA(n) + a ribonucleoside 5'-triphosphate = RNA(n+1) + diphosphate. In terms of biological role, RNA-dependent RNA polymerase which replicates the viral genome. The sequence is that of RNA-directed RNA polymerase (p1) from Penicillium chrysogenum (Penicillium notatum).